Here is a 242-residue protein sequence, read N- to C-terminus: Protein CDV3 homolog B (242 aa).

The span at 1–15 (MAEPEERSLDDFFAK) shows a compositional bias: basic and acidic residues. Residues 1 to 242 (MAEPEERSLD…DNQYAVLGEQ (242 aa)) form a disordered region. The residue at position 2 (alanine 2) is an N-acetylalanine. The span at 30–57 (AAGSRGPARPSDGATSSSLSSYVSAAGK) shows a compositional bias: low complexity. Residues 59-75 (VKKEKSGKSENPDQLQE) are compositionally biased toward basic and acidic residues. The segment covering 105–122 (KEDDENENKEEQGADWEE) has biased composition (acidic residues). 2 stretches are compositionally biased toward polar residues: residues 129 to 143 (DKSS…QAQA) and 183 to 194 (SDTQFPSPQATA). Over residues 195–213 (KHTESRREKEMEKTFEIVK) the composition is skewed to basic and acidic residues.

It belongs to the CDV3 family.

It is found in the cytoplasm. This Xenopus laevis (African clawed frog) protein is Protein CDV3 homolog B (cdv3-b).